An 858-amino-acid chain; its full sequence is Volume-regulated anion channel subunit LRRC8D (858 aa).

Residues 1 to 22 (MFTLAEVASLNDIQPTYRILKP) are Cytoplasmic-facing. Residues 23-48 (WWDVFMDYLAVVMLMVAIFAGTMQLT) traverse the membrane as a helical segment. The Extracellular portion of the chain corresponds to 49–163 (KDQVVCLPVL…YHLALPWYSK (115 aa)). Cys54 and Cys354 are oxidised to a cystine. The segment at 118 to 137 (AESTFPSQETKKEKRDPTGR) is disordered. Positions 126–137 (ETKKEKRDPTGR) are enriched in basic and acidic residues. The helical transmembrane segment at 164 to 182 (YFPYLALIHTIILMVSSNF) threads the bilayer. At 183–308 (WFKYPKTCSK…EDSDLIYKLY (126 aa)) the chain is on the cytoplasmic side. The interval 221 to 251 (SEENKQRITGAQTLPKHVSTSSDEGSPSAST) is disordered. The span at 227–251 (RITGAQTLPKHVSTSSDEGSPSAST) shows a compositional bias: polar residues. A phosphoserine mark is found at Ser241, Ser242, and Ser246. Residues 309–330 (VVQTLIKTAKFIFILCYTANFV) form a helical membrane-spanning segment. Residues 331–360 (NAISFEHVCKPKVEHLTGYEVFECTHNMAY) lie on the Extracellular side of the membrane. Residues 361–386 (MLKKLLISYISIICVYGFICLYTLFW) form a helical membrane-spanning segment. Over 387–858 (LFRIPLKEYS…DVNVPFANGI (472 aa)) the chain is Cytoplasmic. LRR repeat units follow at residues 514–534 (NLQE…AFSF), 538–559 (HLRC…VYLL), 561–582 (NLRE…IGLE), 589–609 (HLKI…ITDV), 612–632 (HLTK…NSLK), 636–657 (NVAE…IFSL), 659–680 (NLQE…ISFQ), 684–705 (RLTC…ITHV), 707–728 (NLES…VFSL), 730–751 (KLRC…IGLL), 753–774 (NLQH…LFKC), 776–797 (KLRT…ISQL), and 799–820 (QLTQ…LGQC).

It belongs to the LRRC8 family. As to quaternary structure, heterohexamer; oligomerizes with other LRRC8 proteins (LRRC8A, LRRC8B, LRRC8C and/or LRRC8E) to form a heterohexamer. In vivo, the subunit composition may depend primarily on expression levels, and heterooligomeric channels containing various proportions of the different LRRC8 proteins may coexist.

It localises to the cell membrane. It is found in the endoplasmic reticulum membrane. It catalyses the reaction chloride(in) = chloride(out). The catalysed reaction is iodide(out) = iodide(in). It carries out the reaction taurine(out) = taurine(in). Its function is as follows. Non-essential component of the volume-regulated anion channel (VRAC, also named VSOAC channel), an anion channel required to maintain a constant cell volume in response to extracellular or intracellular osmotic changes. The VRAC channel conducts iodide better than chloride and can also conduct organic osmolytes like taurine. Plays a redundant role in the efflux of amino acids, such as aspartate, in response to osmotic stress. Channel activity requires LRRC8A plus at least one other family member (LRRC8B, LRRC8C, LRRC8D or LRRC8E); channel characteristics depend on the precise subunit composition. Also acts as a regulator of glucose-sensing in pancreatic beta cells: VRAC currents, generated in response to hypotonicity- or glucose-induced beta cell swelling, depolarize cells, thereby causing electrical excitation, leading to increase glucose sensitivity and insulin secretion. VRAC channels containing LRRC8D inhibit transport of immunoreactive cyclic dinucleotide GMP-AMP (2'-3'-cGAMP), an immune messenger produced in response to DNA virus in the cytosol. The protein is Volume-regulated anion channel subunit LRRC8D of Rattus norvegicus (Rat).